A 215-amino-acid polypeptide reads, in one-letter code: UPF0173 metal-dependent hydrolase NEQ378 (215 aa).

This sequence belongs to the UPF0173 family.

In Nanoarchaeum equitans (strain Kin4-M), this protein is UPF0173 metal-dependent hydrolase NEQ378.